The following is a 275-amino-acid chain: Adaptin ear-binding coat-associated protein 1 (275 aa).

Residues 170–191 (KGGASKPRTARGGGLSLLPPPP) form a disordered region. Arg180 carries the omega-N-methylarginine modification. A Phosphothreonine modification is found at Thr211. Short sequence motifs (WXXF motif) lie at residues 252 to 255 (WGDF) and 272 to 275 (WVQF). Residues 254-275 (DFSTASSSVPNQAPQPSNWVQF) are disordered. Polar residues predominate over residues 256–275 (STASSSVPNQAPQPSNWVQF).

This sequence belongs to the NECAP family. As to quaternary structure, interacts with AP1G1 and AP2A1 components of the adapter protein complexes AP-1 and AP-2. Interacts with the GAE domain proteins GGA1, GGA2 and GGA3.

The protein resides in the cytoplasmic vesicle. It localises to the clathrin-coated vesicle membrane. Its subcellular location is the cell membrane. Its function is as follows. Involved in endocytosis. The chain is Adaptin ear-binding coat-associated protein 1 (NECAP1) from Homo sapiens (Human).